The chain runs to 212 residues: Ribonuclease HII (212 aa).

In terms of domain architecture, RNase H type-2 spans 17-211 (ANLAGIDEAG…VIEALLSLEQ (195 aa)). Residues Asp23, Glu24, and Asp120 each contribute to the a divalent metal cation site.

This sequence belongs to the RNase HII family. Requires Mn(2+) as cofactor. The cofactor is Mg(2+).

It localises to the cytoplasm. The enzyme catalyses Endonucleolytic cleavage to 5'-phosphomonoester.. Its function is as follows. Endonuclease that specifically degrades the RNA of RNA-DNA hybrids. The chain is Ribonuclease HII from Chloroflexus aurantiacus (strain ATCC 29364 / DSM 637 / Y-400-fl).